The sequence spans 192 residues: FMN-dependent NADH:quinone oxidoreductase 1 (192 aa).

Residues S9 and 15–17 (SYS) each bind FMN.

It belongs to the azoreductase type 1 family. In terms of assembly, homodimer. It depends on FMN as a cofactor.

The catalysed reaction is 2 a quinone + NADH + H(+) = 2 a 1,4-benzosemiquinone + NAD(+). It carries out the reaction N,N-dimethyl-1,4-phenylenediamine + anthranilate + 2 NAD(+) = 2-(4-dimethylaminophenyl)diazenylbenzoate + 2 NADH + 2 H(+). Functionally, quinone reductase that provides resistance to thiol-specific stress caused by electrophilic quinones. In terms of biological role, also exhibits azoreductase activity. Catalyzes the reductive cleavage of the azo bond in aromatic azo compounds to the corresponding amines. The polypeptide is FMN-dependent NADH:quinone oxidoreductase 1 (Colwellia psychrerythraea (strain 34H / ATCC BAA-681) (Vibrio psychroerythus)).